Here is a 601-residue protein sequence, read N- to C-terminus: NAD-dependent malic enzyme 59 kDa isoform, mitochondrial (601 aa).

The transit peptide at 1-18 (MWRVARSAASTFRRTRRL) directs the protein to the mitochondrion. The Proton donor role is filled by Tyr129. Arg182 is a binding site for NAD(+). Lys200 serves as the catalytic Proton acceptor. 3 residues coordinate a divalent metal cation: Glu271, Asp272, and Asp295. 2 residues coordinate NAD(+): Asp295 and Asn444.

Belongs to the malic enzymes family. As to quaternary structure, heterodimer of two related subunits. Mg(2+) serves as cofactor. Mn(2+) is required as a cofactor.

It localises to the mitochondrion matrix. It catalyses the reaction (S)-malate + NAD(+) = pyruvate + CO2 + NADH. The sequence is that of NAD-dependent malic enzyme 59 kDa isoform, mitochondrial from Solanum tuberosum (Potato).